The primary structure comprises 452 residues: Septin-10 (452 aa).

A Septin-type G domain is found at Gln-36–Glu-302. The G1 motif stretch occupies residues Gly-46–Ser-53. Residues Gly-46–Ser-53, Gly-101, Lys-182–Glu-190, Gly-236, and Arg-251 contribute to the GTP site. The G3 motif stretch occupies residues Asn-98 to Gly-101. The interval Ala-181–Asp-184 is G4 motif. Ser-414 carries the phosphoserine modification.

This sequence belongs to the TRAFAC class TrmE-Era-EngA-EngB-Septin-like GTPase superfamily. Septin GTPase family. In terms of assembly, septins polymerize into heterooligomeric protein complexes that form filaments, and can associate with cellular membranes, actin filaments and microtubules. GTPase activity is required for filament formation. Interacts with ADGB. Proteolytically cleaved in vitro in a calmodulin-dependent manner.

It is found in the cytoplasm. The protein localises to the cytoskeleton. The protein resides in the cell projection. It localises to the cilium. Its subcellular location is the flagellum. Its function is as follows. Filament-forming cytoskeletal GTPase. May play a role in cytokinesis (Potential). The polypeptide is Septin-10 (Mus musculus (Mouse)).